Reading from the N-terminus, the 103-residue chain is Small ribosomal subunit protein uS10 (103 aa).

The protein belongs to the universal ribosomal protein uS10 family. In terms of assembly, part of the 30S ribosomal subunit.

Functionally, involved in the binding of tRNA to the ribosomes. This Buchnera aphidicola subsp. Acyrthosiphon pisum (strain 5A) protein is Small ribosomal subunit protein uS10.